A 124-amino-acid polypeptide reads, in one-letter code: Small ribosomal subunit protein uS12 (124 aa).

The segment at M1–A26 is disordered. D89 is modified (3-methylthioaspartic acid). Residues T104 to D124 form a disordered region.

This sequence belongs to the universal ribosomal protein uS12 family. Part of the 30S ribosomal subunit. Contacts proteins S8 and S17. May interact with IF1 in the 30S initiation complex.

Functionally, with S4 and S5 plays an important role in translational accuracy. Interacts with and stabilizes bases of the 16S rRNA that are involved in tRNA selection in the A site and with the mRNA backbone. Located at the interface of the 30S and 50S subunits, it traverses the body of the 30S subunit contacting proteins on the other side and probably holding the rRNA structure together. The combined cluster of proteins S8, S12 and S17 appears to hold together the shoulder and platform of the 30S subunit. The sequence is that of Small ribosomal subunit protein uS12 from Prochlorococcus marinus (strain MIT 9215).